The chain runs to 453 residues: Tubulin gamma chain (453 aa).

GTP is bound at residue 142 to 148; the sequence is AGGTGSG.

The protein belongs to the tubulin family.

It localises to the cytoplasm. It is found in the cytoskeleton. The protein localises to the microtubule organizing center. The protein resides in the spindle pole body. Tubulin is the major constituent of microtubules. The gamma chain is found at microtubule organizing centers (MTOC) such as the spindle poles or the centrosome, suggesting that it is involved in the minus-end nucleation of microtubule assembly. In Coprinopsis cinerea (strain Okayama-7 / 130 / ATCC MYA-4618 / FGSC 9003) (Inky cap fungus), this protein is Tubulin gamma chain (TUB4).